The sequence spans 262 residues: Oxidoreductase GME11367 (262 aa).

Belongs to the avfA family.

It participates in secondary metabolite biosynthesis. In terms of biological role, oxidoreductase; part of the gene cluster that mediates the biosynthesis of dibenzodioxocinones such as pestalotiollide B, a novel class of inhibitors against cholesterol ester transfer protein (CEPT). The biosynthesis initiates from condensation of acetate and malonate units catalyzed by the non-reducing PKS pks8/GME11356. Pks8/GME11356 lacks a thioesterase (TE) domain, which is important to the cyclizing of the third ring of atrochrysone carboxylic acid, and the esterase GME11355 might play the role of TE and catalyzes the cyclization reaction of the C ring. The lactamase-like protein GME11357 (or other beta-lactamases in Pestalotiopsis microspora) probably hydrolyzes the thioester bond between the ACP of pks8/GME11356 and the intermediate to release atrochrysone carboxylic acid, which is spontaneously dehydrates to form endocrocin anthrone. Endocrocin anthrone is further converted to emodin via the endocrocin intermediate. Emodin is then oxidized by several enzymes such as the Baeyer-Villiger oxidase GME11358, the oxidoreductase GME11367, the short chain dehydrogenase/reductase GME11373, as well as by other oxidoreductases from the cluster, to modify the A and C rings and open the B ring, and finally yield monodictyphenone. The prenyltransferase GME11375 may catalyze the addition reaction between the C5 side chains and the carbon bone of dibenzodioxocinones. The remaining biochemical reactions to the final product dibenzodioxocinones should be methylation catalyzed by methyltransferase GME11366 and reduction and lactonization reaction catalyzed by a series of oxidordeuctases. The protein is Oxidoreductase GME11367 of Pestalotiopsis microspora.